Consider the following 515-residue polypeptide: Low affinity ammonium transporter (515 aa).

At 1–78 the chain is on the extracellular side; it reads MSTSSSVTQK…IIGNSFGTTN (78 aa). Residues 79–99 form a helical membrane-spanning segment; it reads AGQLSWFASAYSLTVGTFILI. At 100 to 111 the chain is on the cytoplasmic side; it reads AGRLGDIFGHKK. A helical membrane pass occupies residues 112 to 132; it reads FFVLGFFWYALWSLLAGFSVY. Residues 133 to 140 lie on the Extracellular side of the membrane; that stretch reads SNQIFFDC. A helical membrane pass occupies residues 141–161; it reads CRAFQGMGPAFLLPNAIAILG. Residues 162–171 are Cytoplasmic-facing; sequence RTYKPGRRKN. The chain crosses the membrane as a helical span at residues 172–192; sequence MVFSLFGASAPGGFFLGAVFS. Residues 193–202 lie on the Extracellular side of the membrane; sequence SMLGQLAWWP. Residues 203–223 form a helical membrane-spanning segment; the sequence is WAYWIMGIACFVLAVAGYFVI. Topologically, residues 224–241 are cytoplasmic; that stretch reads PHTPMPSRDASSFKLLER. Residues 242–262 form a helical membrane-spanning segment; that stretch reads IDFAGSVTGVVGLILFNFAWN. Residues 263–270 lie on the Extracellular side of the membrane; it reads QGPVVGWQ. The chain crosses the membrane as a helical span at residues 271–291; that stretch reads TPYTYALLIVGTFFLVIFAYI. The Cytoplasmic portion of the chain corresponds to 292-310; it reads ESRAAFPLLPFAALSSDTA. A helical transmembrane segment spans residues 311-331; sequence FVLSCIAAGWASFGIWIFYTW. The Extracellular portion of the chain corresponds to 332–346; the sequence is QFMEDSRGQTPLLSS. Residues 347–367 form a helical membrane-spanning segment; it reads AQFSPVAISGFCAAVTTGFLL. Residues 368 to 374 lie on the Cytoplasmic side of the membrane; sequence SHTPPST. Residues 375–395 form a helical membrane-spanning segment; sequence VMLFAMTAFTVGTILIATAPV. Residues 396-403 lie on the Extracellular side of the membrane; the sequence is HQTYWAQT. A helical transmembrane segment spans residues 404–424; that stretch reads FVSIIVMPWGMDMSFPAATIM. The Cytoplasmic portion of the chain corresponds to 425-435; the sequence is LSDSMPHEHQG. Residues 436–456 traverse the membrane as a helical segment; sequence LAASLVNTVVNYSISIGLGIA. The Extracellular segment spans residues 457–479; that stretch reads GTIESRVNDGGAKPLKGYRCSWY. A helical transmembrane segment spans residues 480 to 500; sequence MGIGLSGLGIFVAATYAWSTF. Over 501-515 the chain is Cytoplasmic; that stretch reads MKSKKRISEKQHFIE.

It belongs to the major facilitator superfamily.

The protein localises to the cell membrane. In terms of biological role, low affinity ammonium transporter of the plasma membrane. May be involved in drug resistance through pumping them out of the cell. This chain is Low affinity ammonium transporter, found in Saccharomyces cerevisiae (strain ATCC 204508 / S288c) (Baker's yeast).